Reading from the N-terminus, the 81-residue chain is Exodeoxyribonuclease 7 small subunit (81 aa).

The segment covering 60-70 has biased composition (basic and acidic residues); sequence LVDKDGNEKAL. The segment at 60–81 is disordered; sequence LVDKDGNEKALDPQNASAPEEE.

This sequence belongs to the XseB family. As to quaternary structure, heterooligomer composed of large and small subunits.

The protein resides in the cytoplasm. It carries out the reaction Exonucleolytic cleavage in either 5'- to 3'- or 3'- to 5'-direction to yield nucleoside 5'-phosphates.. Functionally, bidirectionally degrades single-stranded DNA into large acid-insoluble oligonucleotides, which are then degraded further into small acid-soluble oligonucleotides. The polypeptide is Exodeoxyribonuclease 7 small subunit (Lactobacillus johnsonii (strain CNCM I-12250 / La1 / NCC 533)).